The chain runs to 364 residues: G-protein coupled receptor 4 (364 aa).

The Extracellular segment spans residues 1–8; the sequence is MCNVSQDS. Residue N3 is glycosylated (N-linked (GlcNAc...) asparagine). The chain crosses the membrane as a helical span at residues 9-45; it reads CNIDSRLDSLFPPTLYIFVMVIGFPTNCLSLWAAFVQ. 2 cysteine pairs are disulfide-bonded: C9-C258 and C90-C168. Topologically, residues 46–49 are cytoplasmic; it reads VRQK. Residues 50–80 traverse the membrane as a helical segment; it reads NELGVYLLNLSISDLLYIATLPPWVNYFLHQ. Over 81 to 85 the chain is Extracellular; the sequence is DNWIH. A helical membrane pass occupies residues 86–121; sequence GPESCKLFGFILYTNIYISIGFLSCISVDRYLAVAH. At 122 to 129 the chain is on the cytoplasmic side; it reads PLKFAKVR. Residues 130 to 156 traverse the membrane as a helical segment; sequence RVKTAAVVSAVVWAIEIGANSAPLFHN. Residues 157 to 172 lie on the Extracellular side of the membrane; sequence ELFEDRFNHTFCFEKY. Positions 157–172 are extracellular loop 2 (ECL2); that stretch reads ELFEDRFNHTFCFEKY. N164 carries an N-linked (GlcNAc...) asparagine glycan. A helical transmembrane segment spans residues 173 to 210; that stretch reads PMEDWVAQMNLYRVFVGFLFPWVLMLFCYQGILRAVKT. Residues 211 to 214 are Cytoplasmic-facing; sequence NVST. The chain crosses the membrane as a helical span at residues 215 to 250; the sequence is EREEKAKIKRLALSLIAILLFCFAPYHLILLSRSVV. The Extracellular segment spans residues 251–260; the sequence is YLGQPCDCTF. The chain crosses the membrane as a helical span at residues 261–289; sequence EENIFTAYHVSLALTSLNCVADPILYCLA. Over 290 to 364 the chain is Cytoplasmic; the sequence is NEGARSEVTR…RVRRRRDCKC (75 aa).

Belongs to the G-protein coupled receptor 1 family.

The protein localises to the cell membrane. Activated by a network of residues that connects an extracellular-facing cavity to Glu-145, a conserved charged residue buried in the transmembrane core of the receptor. Protonation likely drives conformational changes in extracellular loop 2 (ECL2), which stabilizes movement of transmembrane 3 (TM3) and a series of rearrangements that connect the extracellular-facing cavity to Glu-145, a residue only conserved in proton-sensing G-protein coupled receptors. Proton-sensing G-protein coupled receptor activated by extracellular pH, which is required to monitor pH changes and generate adaptive reactions. Ligand binding causes a conformation change that triggers signaling via guanine nucleotide-binding proteins (G proteins) and modulates the activity of downstream effectors, such as adenylate cyclase. The chain is G-protein coupled receptor 4 from Callorhinchus milii (Ghost shark).